Here is a 356-residue protein sequence, read N- to C-terminus: DNA polymerase IV (356 aa).

In terms of domain architecture, UmuC spans 1-188 (MDTSRKIIHI…IPVTKFYGVG (188 aa)). Residues D11 and D106 each coordinate Mg(2+). Residue E107 is part of the active site.

This sequence belongs to the DNA polymerase type-Y family. As to quaternary structure, monomer. Mg(2+) serves as cofactor.

It localises to the cytoplasm. The catalysed reaction is DNA(n) + a 2'-deoxyribonucleoside 5'-triphosphate = DNA(n+1) + diphosphate. Poorly processive, error-prone DNA polymerase involved in untargeted mutagenesis. Copies undamaged DNA at stalled replication forks, which arise in vivo from mismatched or misaligned primer ends. These misaligned primers can be extended by PolIV. Exhibits no 3'-5' exonuclease (proofreading) activity. May be involved in translesional synthesis, in conjunction with the beta clamp from PolIII. This chain is DNA polymerase IV, found in Listeria innocua serovar 6a (strain ATCC BAA-680 / CLIP 11262).